Here is a 264-residue protein sequence, read N- to C-terminus: MTNPAPSDALVIAGKHYRSRLLTGTGKFKDLDETRLATEAAAAEIVTVAIRRVNIGQDPNAPSLLDVLPPERYTLLPNTAGCYTAEDAVRTCRLARELLDGHNLTKLEVLGDEKTLYPDVVQTLKAAEQLVADGFEVMVYTSDDPILAKRLEDIGCVAVMPLAAPIGSGLGIQNKYNLLEIIENAKVPIIVDAGVGTASDAAIAMELGCDGVLMNTAIAGARDPILMASAMRKAIEAGREAFLAGRIPRKRYASASSPVDGVIG.

Residue Lys106 is the Schiff-base intermediate with DXP of the active site. Residues Gly167, 193–194, and 215–216 each bind 1-deoxy-D-xylulose 5-phosphate; these read AG and NT.

Belongs to the ThiG family. Homotetramer. Forms heterodimers with either ThiH or ThiS.

The protein resides in the cytoplasm. The catalysed reaction is [ThiS sulfur-carrier protein]-C-terminal-Gly-aminoethanethioate + 2-iminoacetate + 1-deoxy-D-xylulose 5-phosphate = [ThiS sulfur-carrier protein]-C-terminal Gly-Gly + 2-[(2R,5Z)-2-carboxy-4-methylthiazol-5(2H)-ylidene]ethyl phosphate + 2 H2O + H(+). Its pathway is cofactor biosynthesis; thiamine diphosphate biosynthesis. In terms of biological role, catalyzes the rearrangement of 1-deoxy-D-xylulose 5-phosphate (DXP) to produce the thiazole phosphate moiety of thiamine. Sulfur is provided by the thiocarboxylate moiety of the carrier protein ThiS. In vitro, sulfur can be provided by H(2)S. This is Thiazole synthase from Xanthomonas axonopodis pv. citri (strain 306).